The sequence spans 483 residues: uncharacterized protein (483 aa).

It localises to the nucleus. Its subcellular location is the mitochondrion. This is an uncharacterized protein from Saccharomyces cerevisiae (strain ATCC 204508 / S288c) (Baker's yeast).